The chain runs to 223 residues: Glutathione S-transferase 4 (223 aa).

The residue at position 2 (Ala2) is a Blocked amino end (Ala). A GST N-terminal domain is found at 4-85; that stretch reads PAVKVYGWAI…HVLRKHKPEL (82 aa). Glutathione is bound by residues Ser14, 43–44, 56–57, and 69–70; these read HR, KV, and ES. A GST C-terminal domain is found at 90–223; sequence RLEQTAMVDV…VGAGAPKEQE (134 aa).

This sequence belongs to the GST superfamily. Phi family. In terms of assembly, homodimer or heterodimer of GST-I and GST-IV (=GST-II). As to expression, seedling roots.

The enzyme catalyses RX + glutathione = an S-substituted glutathione + a halide anion + H(+). Functionally, conjugation of reduced glutathione to a wide number of exogenous and endogenous hydrophobic electrophiles. Involved in the detoxification of certain herbicides. Most active with substrates possessing a chloroacetamide structure. Trans-cinnamic acid and 1-chloro-2,4-dinitrobenzene are not effective substrates. May play an important role in the benoxacor-mediated protection of maize from metolachlor injury. This is Glutathione S-transferase 4 (GST4) from Zea mays (Maize).